A 642-amino-acid polypeptide reads, in one-letter code: Threonine--tRNA ligase (642 aa).

The tract at residues 239 to 530 is catalytic; that stretch reads DHRKLGKELN…LTEHYAGAFP (292 aa). Cysteine 331, histidine 382, and histidine 507 together coordinate Zn(2+).

This sequence belongs to the class-II aminoacyl-tRNA synthetase family. Homodimer. It depends on Zn(2+) as a cofactor.

The protein resides in the cytoplasm. It carries out the reaction tRNA(Thr) + L-threonine + ATP = L-threonyl-tRNA(Thr) + AMP + diphosphate + H(+). Functionally, catalyzes the attachment of threonine to tRNA(Thr) in a two-step reaction: L-threonine is first activated by ATP to form Thr-AMP and then transferred to the acceptor end of tRNA(Thr). Also edits incorrectly charged L-seryl-tRNA(Thr). This Lawsonia intracellularis (strain PHE/MN1-00) protein is Threonine--tRNA ligase.